A 255-amino-acid polypeptide reads, in one-letter code: MSIRVIIAGFKGKMGQAACQMVLTDPDLDLVAVLDPFESESEWQGIPVFKDKADLAGFEADVWVDFTTPAVAYENTRFALENGFAPVVGTTGFTSEEIAELKEFSRAQDLGGLIAPNFALGAVLLMQFATQAAKYFPNVEIIELHHDKKKDAPSGTAIKTAELMAEVRESIQQGAADEEELIAGARGADFDGMRIHSVRLPGLVAHQEVIFGNQGEGLTLRHDSYDRISFMTGVNLGIKEVVKRHELVYGLEHLL.

NAD(+)-binding positions include 9 to 14 (GFKGKM), Asp-35, 89 to 91 (GTT), and 115 to 118 (APNF). The Proton donor/acceptor role is filled by His-145. His-146 provides a ligand contact to (S)-2,3,4,5-tetrahydrodipicolinate. Catalysis depends on Lys-149, which acts as the Proton donor. A (S)-2,3,4,5-tetrahydrodipicolinate-binding site is contributed by 155–156 (GT).

This sequence belongs to the DapB family.

The protein localises to the cytoplasm. It carries out the reaction (S)-2,3,4,5-tetrahydrodipicolinate + NAD(+) + H2O = (2S,4S)-4-hydroxy-2,3,4,5-tetrahydrodipicolinate + NADH + H(+). It catalyses the reaction (S)-2,3,4,5-tetrahydrodipicolinate + NADP(+) + H2O = (2S,4S)-4-hydroxy-2,3,4,5-tetrahydrodipicolinate + NADPH + H(+). The protein operates within amino-acid biosynthesis; L-lysine biosynthesis via DAP pathway; (S)-tetrahydrodipicolinate from L-aspartate: step 4/4. Functionally, catalyzes the conversion of 4-hydroxy-tetrahydrodipicolinate (HTPA) to tetrahydrodipicolinate. This is 4-hydroxy-tetrahydrodipicolinate reductase from Streptococcus pneumoniae serotype 4 (strain ATCC BAA-334 / TIGR4).